Reading from the N-terminus, the 347-residue chain is Ketol-acid reductoisomerase (NADP(+)) (347 aa).

Residues 1-185 (MKIYYDEDAN…GGTRAGVLET (185 aa)) enclose the KARI N-terminal Rossmann domain. Residues 24–27 (YGSQ), Arg-47, Ser-50, Ser-52, and 82–85 (DEFQ) contribute to the NADP(+) site. Residue His-107 is part of the active site. Gly-133 is a binding site for NADP(+). Residues 186-336 (SFKEETETDL…AELRSKMKFL (151 aa)) enclose the KARI C-terminal knotted domain. Mg(2+) contacts are provided by Asp-194, Glu-198, Glu-230, and Glu-234. Ser-255 contributes to the substrate binding site.

Belongs to the ketol-acid reductoisomerase family. Mg(2+) is required as a cofactor.

The catalysed reaction is (2R)-2,3-dihydroxy-3-methylbutanoate + NADP(+) = (2S)-2-acetolactate + NADPH + H(+). The enzyme catalyses (2R,3R)-2,3-dihydroxy-3-methylpentanoate + NADP(+) = (S)-2-ethyl-2-hydroxy-3-oxobutanoate + NADPH + H(+). The protein operates within amino-acid biosynthesis; L-isoleucine biosynthesis; L-isoleucine from 2-oxobutanoate: step 2/4. Its pathway is amino-acid biosynthesis; L-valine biosynthesis; L-valine from pyruvate: step 2/4. Its function is as follows. Involved in the biosynthesis of branched-chain amino acids (BCAA). Catalyzes an alkyl-migration followed by a ketol-acid reduction of (S)-2-acetolactate (S2AL) to yield (R)-2,3-dihydroxy-isovalerate. In the isomerase reaction, S2AL is rearranged via a Mg-dependent methyl migration to produce 3-hydroxy-3-methyl-2-ketobutyrate (HMKB). In the reductase reaction, this 2-ketoacid undergoes a metal-dependent reduction by NADPH to yield (R)-2,3-dihydroxy-isovalerate. The sequence is that of Ketol-acid reductoisomerase (NADP(+)) from Gamma-proteobacterium EBAC31A08.